A 218-amino-acid polypeptide reads, in one-letter code: Hypoxanthine-guanine phosphoribosyltransferase (218 aa).

An N-acetylalanine modification is found at Ala2. Position 69 (Lys69) interacts with GMP. The residue at position 103 (Lys103) is an N6-acetyllysine. A Glycyl lysine isopeptide (Lys-Gly) (interchain with G-Cter in SUMO1); alternate cross-link involves residue Lys115. Lys115 participates in a covalent cross-link: Glycyl lysine isopeptide (Lys-Gly) (interchain with G-Cter in SUMO2); alternate. Residues 134–142, Lys166, 186–188, and Asp194 contribute to the GMP site; these read EDIIDTGKT and KFV. Asp138 functions as the Proton acceptor in the catalytic mechanism. Thr142 is modified (phosphothreonine). Residue Asp194 coordinates Mg(2+).

The protein belongs to the purine/pyrimidine phosphoribosyltransferase family. Homotetramer. Mg(2+) serves as cofactor.

It is found in the cytoplasm. It carries out the reaction IMP + diphosphate = hypoxanthine + 5-phospho-alpha-D-ribose 1-diphosphate. The catalysed reaction is GMP + diphosphate = guanine + 5-phospho-alpha-D-ribose 1-diphosphate. It participates in purine metabolism; IMP biosynthesis via salvage pathway; IMP from hypoxanthine: step 1/1. Its function is as follows. Converts guanine to guanosine monophosphate, and hypoxanthine to inosine monophosphate. Transfers the 5-phosphoribosyl group from 5-phosphoribosylpyrophosphate onto the purine. Plays a central role in the generation of purine nucleotides through the purine salvage pathway. In Homo sapiens (Human), this protein is Hypoxanthine-guanine phosphoribosyltransferase (HPRT1).